Reading from the N-terminus, the 921-residue chain is Isoleucine--tRNA ligase (921 aa).

Positions 57-67 match the 'HIGH' region motif; sequence PYANGELHMGH. Residue Glu-552 participates in L-isoleucyl-5'-AMP binding. Positions 593–597 match the 'KMSKS' region motif; that stretch reads KMSKS. Lys-596 is a binding site for ATP. 4 residues coordinate Zn(2+): Cys-888, Cys-891, Cys-908, and Cys-911.

Belongs to the class-I aminoacyl-tRNA synthetase family. IleS type 1 subfamily. As to quaternary structure, monomer. It depends on Zn(2+) as a cofactor.

It localises to the cytoplasm. It carries out the reaction tRNA(Ile) + L-isoleucine + ATP = L-isoleucyl-tRNA(Ile) + AMP + diphosphate. Its function is as follows. Catalyzes the attachment of isoleucine to tRNA(Ile). As IleRS can inadvertently accommodate and process structurally similar amino acids such as valine, to avoid such errors it has two additional distinct tRNA(Ile)-dependent editing activities. One activity is designated as 'pretransfer' editing and involves the hydrolysis of activated Val-AMP. The other activity is designated 'posttransfer' editing and involves deacylation of mischarged Val-tRNA(Ile). The chain is Isoleucine--tRNA ligase from Listeria monocytogenes serovar 1/2a (strain ATCC BAA-679 / EGD-e).